The sequence spans 690 residues: Probable xyloglucan glycosyltransferase 1 (690 aa).

2 consecutive transmembrane segments (helical) span residues 120–140 (AFLL…AQGW) and 166–186 (LEYL…LFLI). Residue Asp272 is part of the active site. Residues Asp331 and Asp333 each coordinate substrate. Asp425 is a catalytic residue. Helical transmembrane passes span 503-523 (LILP…TMFV) and 528-548 (LPAW…ILPA). Positions 607–637 (QPKQQRVGSAPNLDSLAKESHPKKDSKKKKH) are disordered. Transmembrane regions (helical) follow at residues 640–659 (IYQK…ARSL) and 665–685 (IHFY…LDLI).

Belongs to the glycosyltransferase 2 family. Plant cellulose synthase-like C subfamily.

The protein resides in the golgi apparatus membrane. Its function is as follows. Probable beta-1,4-glucan synthase rather involved in the synthesis of the xyloglucan backbone than cellulose. Seems to work simultaneously with xyloglucan 6-xylosyltransferase. Xyloglucan is a noncellulosic polysaccharides of plant cell wall and consists of a glucan backbone substituted by xylose, galactose and fucose. This chain is Probable xyloglucan glycosyltransferase 1 (CSLC1), found in Oryza sativa subsp. japonica (Rice).